Consider the following 887-residue polypeptide: Alanine--tRNA ligase (887 aa).

Zn(2+)-binding residues include His-579, His-583, Cys-681, and His-685.

Belongs to the class-II aminoacyl-tRNA synthetase family. Zn(2+) serves as cofactor.

The protein resides in the cytoplasm. The enzyme catalyses tRNA(Ala) + L-alanine + ATP = L-alanyl-tRNA(Ala) + AMP + diphosphate. Its function is as follows. Catalyzes the attachment of alanine to tRNA(Ala) in a two-step reaction: alanine is first activated by ATP to form Ala-AMP and then transferred to the acceptor end of tRNA(Ala). Also edits incorrectly charged Ser-tRNA(Ala) and Gly-tRNA(Ala) via its editing domain. This Flavobacterium psychrophilum (strain ATCC 49511 / DSM 21280 / CIP 103535 / JIP02/86) protein is Alanine--tRNA ligase.